Consider the following 307-residue polypeptide: Aquaporin Lacbi1:387054 (307 aa).

At 1 to 40 the chain is on the cytoplasmic side; the sequence is MSNAPLVHLSDLQKRLRVFAVWEKVRNDGKVHWAIECFAE. Residues 41–61 form a helical membrane-spanning segment; that stretch reads MFGVFLYVYFGLGSTAGWVIG. The Extracellular portion of the chain corresponds to 62–68; it reads NIIKETN. A helical transmembrane segment spans residues 69–89; the sequence is LSSILQIGLAYAFGIWFAIGL. Residues 90–120 are Cytoplasmic-facing; sequence CSSSSGGHFNPCVTLSFVVFKGFPKLKACRY. Residues 99–101 carry the NPA 1 motif; the sequence is NPC. A helical membrane pass occupies residues 121-141; sequence IIAQILGAYIASALVYSQWNV. Topologically, residues 142–157 are extracellular; sequence LIEECTLGLIKAKAYD. A helical transmembrane segment spans residues 158-178; it reads TTMFTPNGPAGIFALYLVPGA. An NPA 2 motif is present at residues 167 to 169; it reads AGI. Topologically, residues 179-183 are cytoplasmic; that stretch reads QSVPR. The helical transmembrane segment at 184 to 203 threads the bilayer; that stretch reads ALLNEFVNSTLIGMIIWAAL. Topologically, residues 204 to 216 are extracellular; sequence DPTNMMVPPAMGP. Residues 217 to 237 form a helical membrane-spanning segment; sequence LFISLAYAAVIWGFATPAVAL. Topologically, residues 238-264 are cytoplasmic; that stretch reads NTARDLGARLFAMSIWGTKAAGSGYSA. Residues 265–285 form a helical membrane-spanning segment; that stretch reads IACLINIPATLLGVFLYEVFF. Topologically, residues 286–307 are extracellular; the sequence is TDSDRGKLLPILNGKKLKHIFS.

It belongs to the MIP/aquaporin (TC 1.A.8) family.

The protein localises to the membrane. The enzyme catalyses H2O(in) = H2O(out). The catalysed reaction is NH4(+)(in) = NH4(+)(out). It carries out the reaction urea(in) = urea(out). It catalyses the reaction glycerol(in) = glycerol(out). Its function is as follows. Water channel required to facilitate the transport of water across membranes. In addition to water, also shows strong ammonium transport activity. Also enables low but statistically significant glycerol and urea permeability. May be involved in fungal nitrogen (ammonium) support of the plant host in symbiosis. The protein is Aquaporin Lacbi1:387054 of Laccaria bicolor (strain S238N-H82 / ATCC MYA-4686) (Bicoloured deceiver).